The primary structure comprises 557 residues: Formate--tetrahydrofolate ligase (557 aa).

Residue 65-72 participates in ATP binding; that stretch reads TPAGEGKT.

Belongs to the formate--tetrahydrofolate ligase family.

The catalysed reaction is (6S)-5,6,7,8-tetrahydrofolate + formate + ATP = (6R)-10-formyltetrahydrofolate + ADP + phosphate. The protein operates within one-carbon metabolism; tetrahydrofolate interconversion. The sequence is that of Formate--tetrahydrofolate ligase from Methylococcus capsulatus (strain ATCC 33009 / NCIMB 11132 / Bath).